The sequence spans 207 residues: MARSKTSQRWLKEHFDDPYVKMAQRDGYRSRASYKLLEIQEKDRILRPGMTVVDLGAAPGGWSQVTSRVIGDRGRLIASDILEMDSIPDVTFIQGDFTEDAVFARILEAIGEHPVDLVISDMAPNMSGVRAADQPRAMYLCELALDLAGRVLRPGGDFLIKIFQGEGFDQYHKQAREMFDKVQMRKPLSSRDRSREQYLLARGFRGE.

Residues Gly-60, Trp-62, Asp-80, Asp-96, and Asp-121 each coordinate S-adenosyl-L-methionine. Lys-161 functions as the Proton acceptor in the catalytic mechanism.

It belongs to the class I-like SAM-binding methyltransferase superfamily. RNA methyltransferase RlmE family.

The protein localises to the cytoplasm. It catalyses the reaction uridine(2552) in 23S rRNA + S-adenosyl-L-methionine = 2'-O-methyluridine(2552) in 23S rRNA + S-adenosyl-L-homocysteine + H(+). Specifically methylates the uridine in position 2552 of 23S rRNA at the 2'-O position of the ribose in the fully assembled 50S ribosomal subunit. This is Ribosomal RNA large subunit methyltransferase E from Pseudomonas paraeruginosa (strain DSM 24068 / PA7) (Pseudomonas aeruginosa (strain PA7)).